The sequence spans 337 residues: tRNA N6-adenosine threonylcarbamoyltransferase (337 aa).

Residues H111 and H115 each contribute to the Fe cation site. Residues 134–138 (LVSGG), D167, G180, and N272 contribute to the substrate site. D300 contacts Fe cation.

This sequence belongs to the KAE1 / TsaD family. Requires Fe(2+) as cofactor.

Its subcellular location is the cytoplasm. The enzyme catalyses L-threonylcarbamoyladenylate + adenosine(37) in tRNA = N(6)-L-threonylcarbamoyladenosine(37) in tRNA + AMP + H(+). Required for the formation of a threonylcarbamoyl group on adenosine at position 37 (t(6)A37) in tRNAs that read codons beginning with adenine. Is involved in the transfer of the threonylcarbamoyl moiety of threonylcarbamoyl-AMP (TC-AMP) to the N6 group of A37, together with TsaE and TsaB. TsaD likely plays a direct catalytic role in this reaction. In Photorhabdus laumondii subsp. laumondii (strain DSM 15139 / CIP 105565 / TT01) (Photorhabdus luminescens subsp. laumondii), this protein is tRNA N6-adenosine threonylcarbamoyltransferase.